Here is a 514-residue protein sequence, read N- to C-terminus: Putative transposase y4uI (514 aa).

In terms of domain architecture, HTH IS408-type spans 11 to 93 (VREILKLRLD…PDWSAVAREL (83 aa)). Residues 128 to 317 (HGRLPLVMRQ…TRRALFDELD (190 aa)) form the Integrase catalytic domain.

It belongs to the transposase IS21/IS408/IS1162 family.

The chain is Putative transposase y4uI from Sinorhizobium fredii (strain NBRC 101917 / NGR234).